A 471-amino-acid chain; its full sequence is (13S,14R)-1,13-dihydroxy-N-methylcanadine 13-O-acetyltransferase AT1 (471 aa).

Belongs to the plant acyltransferase family.

It catalyses the reaction (13S,14R)-1,13-dihydroxy-N-methylcanadine + acetyl-CoA = (13S,14R)-13-O-acetyl-1-hydroxy-N-methylcanadine + CoA. Its pathway is alkaloid biosynthesis. In terms of biological role, acetyltransferase involved in the biosynthesis of the benzylisoquinoline alkaloid noscapine. Converts (13S,14R)-1,13-dihydroxy-N-methylcanadine to (13S,14R)-13-O-acetyl-1-hydroxy-N-methylcanadine. This chain is (13S,14R)-1,13-dihydroxy-N-methylcanadine 13-O-acetyltransferase AT1, found in Papaver somniferum (Opium poppy).